Here is a 65-residue protein sequence, read N- to C-terminus: Large ribosomal subunit protein bL35 (65 aa).

The protein belongs to the bacterial ribosomal protein bL35 family.

This Xanthomonas campestris pv. campestris (strain ATCC 33913 / DSM 3586 / NCPPB 528 / LMG 568 / P 25) protein is Large ribosomal subunit protein bL35.